We begin with the raw amino-acid sequence, 448 residues long: Homogentisate 1,2-dioxygenase (448 aa).

His303 (proton acceptor) is an active-site residue. 2 residues coordinate Fe cation: His346 and Glu352. Residues Tyr361 and His382 each contribute to the homogentisate site. His382 contacts Fe cation.

The protein belongs to the homogentisate dioxygenase family. As to quaternary structure, hexamer; dimer of trimers. Fe cation is required as a cofactor.

It carries out the reaction homogentisate + O2 = 4-maleylacetoacetate + H(+). It participates in amino-acid degradation; L-phenylalanine degradation; acetoacetate and fumarate from L-phenylalanine: step 4/6. Its function is as follows. Involved in the catabolism of homogentisate (2,5-dihydroxyphenylacetate or 2,5-OH-PhAc), a central intermediate in the degradation of phenylalanine and tyrosine. Catalyzes the oxidative ring cleavage of the aromatic ring of homogentisate to yield maleylacetoacetate. The sequence is that of Homogentisate 1,2-dioxygenase from Bradyrhizobium diazoefficiens (strain JCM 10833 / BCRC 13528 / IAM 13628 / NBRC 14792 / USDA 110).